The following is a 151-amino-acid chain: Transcriptional regulator MraZ (151 aa).

SpoVT-AbrB domains are found at residues 5-52 (ANAI…PLSE) and 81-124 (AVDL…DEDA).

Belongs to the MraZ family. In terms of assembly, forms oligomers.

It localises to the cytoplasm. The protein localises to the nucleoid. The polypeptide is Transcriptional regulator MraZ (Pseudomonas syringae pv. syringae (strain B728a)).